The chain runs to 588 residues: MSKRTTYCGLVTEELLNQKVTLKGWVHNRRDLGGLIFVDLRDREGIVQIVFNPDFSEEALSVAETVRSEYVVEVEGTVTKRDPDTVNSKIKTGQVEVQVSNISIINKSETPPFSINEENQNVDENIRLKYRYLDLRRPELAQTFKMRHQTTRAIREYLDNNGFFDIETPVLTKSTPEGARDYLVPSRVHEGEFYALPQSPQLFKQLLMISGFDKYYQIVKCFRDEDLRADRQPEFTQVDIEMSFVDQEDVIQMGEEMLRKVVKDVKGIDVSGPFPRMTYEEAMRRYGSDKPDTRFEMELKDVSQLGREMDFKVFKDTVENNGEVKAIVAKGAADNYTRKDMDALTEFVNIYGAKGLAWVKVVDDGLSGPIARFFEDSNVATLKDLTQAESGDLVMFVADKPNVVAQSLGALRIKIAKELGLIDENKLNFLWVTDWPLLEYDEDAKRYVAAHHPFTSPKQEDISKLDSEPQNAQANAYDIVLNGYELGGGSIRIADGELQEKMFEVLGFTKEQAREQFGFLLDAFKYGAPPHGGIALGLDRLVMLLTNRTNLRDTIAFPKTASATCLLTDAPGEVSDKQLEELSLRIRH.

Glutamate 177 lines the L-aspartate pocket. The aspartate stretch occupies residues 201–204 (QLFK). Residue arginine 223 coordinates L-aspartate. Residues 223-225 (RDE) and glutamine 232 contribute to the ATP site. An L-aspartate-binding site is contributed by histidine 451. Residue glutamate 485 coordinates ATP. Arginine 492 is a binding site for L-aspartate. Position 537–540 (537–540 (GLDR)) interacts with ATP.

This sequence belongs to the class-II aminoacyl-tRNA synthetase family. Type 1 subfamily. Homodimer.

The protein localises to the cytoplasm. It carries out the reaction tRNA(Asp) + L-aspartate + ATP = L-aspartyl-tRNA(Asp) + AMP + diphosphate. Catalyzes the attachment of L-aspartate to tRNA(Asp) in a two-step reaction: L-aspartate is first activated by ATP to form Asp-AMP and then transferred to the acceptor end of tRNA(Asp). The chain is Aspartate--tRNA ligase from Staphylococcus haemolyticus (strain JCSC1435).